A 660-amino-acid polypeptide reads, in one-letter code: Zinc transporter ZIP4 (660 aa).

The N-terminal stretch at 1–22 (MLPKSVTQGLVLALLVGTVAVA) is a signal peptide. The Extracellular portion of the chain corresponds to 23–337 (RPRNLLSLLA…QDQLSQTERY (315 aa)). 3 disulfide bridges follow: C56-C61, C64-C110, and C160-C195. Residues N192 and N219 are each glycosylated (N-linked (GlcNAc...) asparagine). The disordered stretch occupies residues 233-273 (GVGGEDHSDHDDHGDHADHSHPDRKASHQDSELHTPHNSNS). The segment covering 236–267 (GEDHSDHDDHGDHADHSHPDRKASHQDSELHT) has biased composition (basic and acidic residues). N272 carries N-linked (GlcNAc...) asparagine glycosylation. C280 and C319 are joined by a disulfide. Residues 338–358 (LYGSLATLLICLCAVFGLLLL) traverse the membrane as a helical segment. Residues 359–376 (TCAKCSTATHYIMQTFLS) lie on the Cytoplasmic side of the membrane. Residues 377–397 (LAVGALTGDALLHLIPKVLGL) form a helical membrane-spanning segment. The Extracellular segment spans residues 398-420 (HTHGGEGHTHEEEVGVGGQATWR). The chain crosses the membrane as a helical span at residues 421–441 (LLAVLGGFYIFFLFESFFNLL). The Cytoplasmic portion of the chain corresponds to 442–511 (LPRDQDSEKD…LRAELRLLPY (70 aa)). Positions 465–467 (LQL) match the Essential for SLC39A4 endocytosis motif. Residues 512–531 (LITLGDAVHNFADGLAVGAA) form a helical membrane-spanning segment. 3 residues coordinate Zn(2+): H520, N521, and D524. The Extracellular portion of the chain corresponds to 532 to 539 (FSSSWKTG). Residues 540 to 566 (LATSLAVFCHELPHELGDFAALLHAGL) traverse the membrane as a helical segment. 3 residues coordinate Zn(2+): H549, E550, and H553. At 567-571 (SVKRA) the chain is on the cytoplasmic side. The helical transmembrane segment at 572-592 (LLLNLASALTAFAGLYVALAV) threads the bilayer. The Extracellular segment spans residues 593–599 (GVGEEGE). A helical membrane pass occupies residues 600–620 (AWILAVATGLFLYVALCDMLP). At 621-630 (AMMNVRDQRP) the chain is on the cytoplasmic side. Residues 631–651 (WLLFLLHNVGLLGGWTVLLLL) traverse the membrane as a helical segment. At 652–660 (SLYEDNITF) the chain is on the extracellular side. N657 is a glycosylation site (N-linked (GlcNAc...) asparagine).

It belongs to the ZIP transporter (TC 2.A.5) family. Homodimer. Homodimerization is mediated by the transmembrane domain. Post-translationally, the extracellular N-terminal ectodomain is cleaved when cells are Zn(2+) deficient, N-terminally cleaved SLC39A4 is then internalized faster. Under excess Zn(2+) conditions, SLC39A4 on the cell surface is rapidly endocytosed, ubiquitinated, and degraded. In terms of processing, N-glycosylated. Highly expressed in the small intestine and embryonic visceral yolk sac. Weakly expressed in the stomach and liver.

It is found in the cell membrane. The protein localises to the recycling endosome membrane. The protein resides in the apical cell membrane. The catalysed reaction is Zn(2+)(in) = Zn(2+)(out). In terms of biological role, selective transporter that mediates the uptake of Zn(2+). Plays an essential role for dietary zinc uptake from small intestine. The Zn(2+) uniporter activity is regulated by zinc availability. Also exhibits polyspecific binding and transport of Cu(2+), Cd(2+) and possibly Ni(2+) but at higher concentrations. The chain is Zinc transporter ZIP4 (Slc39a4) from Mus musculus (Mouse).